Reading from the N-terminus, the 172-residue chain is MVDKRESYTKEDLLASGRGELFDAKGPQLPAPNMLMMDRVVKMTETGGNFDKGYVEAELDINPDLWFFGCHFIGDPVMPGCLGLDAMWQLVGFYLGWLGGEGKGRALGVGEVKFTGQVLPTAKKVTYRIHFKRIVNRRLIMGLADGEVLVDGRLIYTASDLKVGLFQDTSAF.

His71 is an active-site residue.

The protein belongs to the thioester dehydratase family. FabA subfamily. As to quaternary structure, homodimer.

It is found in the cytoplasm. The enzyme catalyses a (3R)-hydroxyacyl-[ACP] = a (2E)-enoyl-[ACP] + H2O. It catalyses the reaction (3R)-hydroxydecanoyl-[ACP] = (2E)-decenoyl-[ACP] + H2O. It carries out the reaction (2E)-decenoyl-[ACP] = (3Z)-decenoyl-[ACP]. It functions in the pathway lipid metabolism; fatty acid biosynthesis. Functionally, necessary for the introduction of cis unsaturation into fatty acids. Catalyzes the dehydration of (3R)-3-hydroxydecanoyl-ACP to E-(2)-decenoyl-ACP and then its isomerization to Z-(3)-decenoyl-ACP. Can catalyze the dehydratase reaction for beta-hydroxyacyl-ACPs with saturated chain lengths up to 16:0, being most active on intermediate chain length. This chain is 3-hydroxydecanoyl-[acyl-carrier-protein] dehydratase, found in Escherichia coli O6:K15:H31 (strain 536 / UPEC).